We begin with the raw amino-acid sequence, 339 residues long: Nicotinate-nucleotide--dimethylbenzimidazole phosphoribosyltransferase (339 aa).

The active-site Proton acceptor is the Glu-306.

It belongs to the CobT family.

The catalysed reaction is 5,6-dimethylbenzimidazole + nicotinate beta-D-ribonucleotide = alpha-ribazole 5'-phosphate + nicotinate + H(+). It functions in the pathway nucleoside biosynthesis; alpha-ribazole biosynthesis; alpha-ribazole from 5,6-dimethylbenzimidazole: step 1/2. Its function is as follows. Catalyzes the synthesis of alpha-ribazole-5'-phosphate from nicotinate mononucleotide (NAMN) and 5,6-dimethylbenzimidazole (DMB). The protein is Nicotinate-nucleotide--dimethylbenzimidazole phosphoribosyltransferase of Brucella canis (strain ATCC 23365 / NCTC 10854 / RM-666).